The primary structure comprises 467 residues: MSVVVQHVEEKAVHSWSRISTAGKKALEEALLVFNPMSQDLSATEAQLVAFLQGLRDDGFQPTILRSGDVYGYSSCTANPPSQTKLQARAPNPTATSPPASAPRTAMRLPAGRATLLPMPLSGRLAKASTPALAKHATTNLLLSSLKQSSASHARGAAVGFPTHLYPGVYPAMRLSVVLEALVPLKTPMPCLGAKHKAQSLQLSLADSPLKLRKSSGKGPGNPRPKAPRKTTSKGPKCLTRKGPGAGPRRGSGHQSKTNRATGSPSVRRMKGGSALGTKTAQAKVARTLAKAARAQAKVARTQAKAAKARAKAKAAQVKAKAKAKAAQVKAKAKVMAAWAKAKAKAKAVRAKAKVARTQPRGRGRPKGSAKARTTRKGQKNRPETVGQKRKRAEEAKDLPPKKRTRLGPRSPKAWLGPGTAKLLKFRAIKVDRRSSDDEVRQRAQRILRVNLSPVIRLQPLLPYSAV.

The segment at 81–105 (PSQTKLQARAPNPTATSPPASAPRT) is disordered. The span at 88 to 105 (ARAPNPTATSPPASAPRT) shows a compositional bias: low complexity. S129 bears the Phosphoserine mark. Disordered regions lie at residues 211–280 (KLRK…GTKT) and 349–416 (VRAK…KAWL). Polar residues predominate over residues 253-265 (GHQSKTNRATGSP). Residues 279–359 (KTAQAKVART…RAKAKVARTQ (81 aa)) adopt a coiled-coil conformation. A compositionally biased stretch (basic residues) spans 349-380 (VRAKAKVARTQPRGRGRPKGSAKARTTRKGQK). Basic and acidic residues predominate over residues 392 to 401 (RAEEAKDLPP).

This is Coiled-coil domain-containing protein 71 (CCDC71) from Homo sapiens (Human).